The primary structure comprises 668 residues: tRNA 5-methylaminomethyl-2-thiouridine biosynthesis bifunctional protein MnmC (668 aa).

The segment at 1–245 (MKHYSIQPAN…KREMLCGVME (245 aa)) is tRNA (mnm(5)s(2)U34)-methyltransferase. An FAD-dependent cmnm(5)s(2)U34 oxidoreductase region spans residues 270–668 (IGGGIASALL…LLKGKAVKAG (399 aa)).

It in the N-terminal section; belongs to the methyltransferase superfamily. tRNA (mnm(5)s(2)U34)-methyltransferase family. This sequence in the C-terminal section; belongs to the DAO family. Requires FAD as cofactor.

The protein resides in the cytoplasm. The enzyme catalyses 5-aminomethyl-2-thiouridine(34) in tRNA + S-adenosyl-L-methionine = 5-methylaminomethyl-2-thiouridine(34) in tRNA + S-adenosyl-L-homocysteine + H(+). In terms of biological role, catalyzes the last two steps in the biosynthesis of 5-methylaminomethyl-2-thiouridine (mnm(5)s(2)U) at the wobble position (U34) in tRNA. Catalyzes the FAD-dependent demodification of cmnm(5)s(2)U34 to nm(5)s(2)U34, followed by the transfer of a methyl group from S-adenosyl-L-methionine to nm(5)s(2)U34, to form mnm(5)s(2)U34. This Escherichia coli (strain K12 / DH10B) protein is tRNA 5-methylaminomethyl-2-thiouridine biosynthesis bifunctional protein MnmC.